Reading from the N-terminus, the 20-residue chain is 23 kDa cell wall protein (20 aa).

The protein localises to the secreted. Its subcellular location is the cell wall. The polypeptide is 23 kDa cell wall protein (Arabidopsis thaliana (Mouse-ear cress)).